We begin with the raw amino-acid sequence, 121 residues long: Prefoldin subunit beta (121 aa).

This sequence belongs to the prefoldin subunit beta family. As to quaternary structure, heterohexamer of two alpha and four beta subunits.

The protein resides in the cytoplasm. Its function is as follows. Molecular chaperone capable of stabilizing a range of proteins. Seems to fulfill an ATP-independent, HSP70-like function in archaeal de novo protein folding. The chain is Prefoldin subunit beta (pfdB) from Methanothermobacter thermautotrophicus (strain ATCC 29096 / DSM 1053 / JCM 10044 / NBRC 100330 / Delta H) (Methanobacterium thermoautotrophicum).